Reading from the N-terminus, the 109-residue chain is Large ribosomal subunit protein uL24 (109 aa).

This sequence belongs to the universal ribosomal protein uL24 family. As to quaternary structure, part of the 50S ribosomal subunit.

Functionally, one of two assembly initiator proteins, it binds directly to the 5'-end of the 23S rRNA, where it nucleates assembly of the 50S subunit. One of the proteins that surrounds the polypeptide exit tunnel on the outside of the subunit. The polypeptide is Large ribosomal subunit protein uL24 (Mesoplasma florum (strain ATCC 33453 / NBRC 100688 / NCTC 11704 / L1) (Acholeplasma florum)).